A 375-amino-acid polypeptide reads, in one-letter code: 23S rRNA (uracil(747)-C(5))-methyltransferase RlmC (375 aa).

Cys-3, Cys-11, Cys-14, and Cys-87 together coordinate [4Fe-4S] cluster. S-adenosyl-L-methionine-binding residues include Gln-212, Phe-241, Glu-262, and Asn-307. Cys-334 functions as the Nucleophile in the catalytic mechanism.

The protein belongs to the class I-like SAM-binding methyltransferase superfamily. RNA M5U methyltransferase family. RlmC subfamily.

It carries out the reaction uridine(747) in 23S rRNA + S-adenosyl-L-methionine = 5-methyluridine(747) in 23S rRNA + S-adenosyl-L-homocysteine + H(+). Functionally, catalyzes the formation of 5-methyl-uridine at position 747 (m5U747) in 23S rRNA. This chain is 23S rRNA (uracil(747)-C(5))-methyltransferase RlmC, found in Escherichia coli O45:K1 (strain S88 / ExPEC).